The sequence spans 563 residues: Type 2 DNA topoisomerase 6 subunit B (563 aa).

ATP contacts are provided by residues Asn-46, Asp-78, Thr-99 to Lys-100, Gly-109 to Ser-116, and Lys-471.

It belongs to the TOP6B family. Homodimer. Heterotetramer of two Top6A and two Top6B chains.

It catalyses the reaction ATP-dependent breakage, passage and rejoining of double-stranded DNA.. Its function is as follows. Relaxes both positive and negative superturns and exhibits a strong decatenase activity. In Thermococcus onnurineus (strain NA1), this protein is Type 2 DNA topoisomerase 6 subunit B.